Here is a 1046-residue protein sequence, read N- to C-terminus: FERM, ARHGEF and pleckstrin domain-containing protein 1 (1046 aa).

The FERM domain maps to 40–320 (ISIKIQMLDD…EHHAFFRLFE (281 aa)). A disordered region spans residues 374–522 (LTAQPSEQHA…LISPLLNDPS (149 aa)). Residues 413 to 424 (KELKASTEDTGQ) are compositionally biased toward basic and acidic residues. Residues 458 to 513 (RMQQNRPQSQQPSTAGSLTGSPHLSELSINSQGGPSVANMSLSPNLSPDAKQSSPL) are compositionally biased toward polar residues. A DH domain is found at 541–732 (KAYFIAKEVA…TEMMAQLHGN (192 aa)). The 98-residue stretch at 761–858 (EFIRLGSLSK…WIEDIQMAID (98 aa)) folds into the PH 1 domain. Residues 864 to 907 (SDPVPELLASSPPDNKSPDETTVDQESEDDLSASRTSLERQSPH) are disordered. Residues 884 to 894 (TTVDQESEDDL) are compositionally biased toward acidic residues. The region spanning 933-1030 (ENQLSGNLLR…WMEVIRSATS (98 aa)) is the PH 2 domain.

Interacts with PLXNA4. As to expression, detected in lateral motor column motor neurons and in preganglionic autonomic motor neurons of the column of Terni in the embryonic spinal cord (at protein level).

The protein resides in the cell membrane. The protein localises to the synapse. Its subcellular location is the synaptosome. It is found in the cytoplasm. It localises to the cytosol. The protein resides in the cell projection. The protein localises to the filopodium. Its subcellular location is the dendrite. It is found in the dendritic spine. Its function is as follows. Functions as a guanine nucleotide exchange factor for RAC1. Plays a role in semaphorin signaling via its interaction with PLXNA4. Plays a role in the assembly and disassembly of dendritic filopodia, the formation of dendritic spines, regulation of dendrite length and ultimately the formation of synapses. In Gallus gallus (Chicken), this protein is FERM, ARHGEF and pleckstrin domain-containing protein 1 (FARP1).